A 189-amino-acid polypeptide reads, in one-letter code: Large ribosomal subunit protein eL19A (189 aa).

K21 is covalently cross-linked (Glycyl lysine isopeptide (Lys-Gly) (interchain with G-Cter in ubiquitin)). A phosphoserine mark is found at S30 and S37. Glycyl lysine isopeptide (Lys-Gly) (interchain with G-Cter in ubiquitin) cross-links involve residues K53 and K60. The tract at residues 58–85 (HSKSRTRAHAQSKREGRHSGYGKRKGTR) is disordered. A compositionally biased stretch (basic residues) spans 59 to 68 (SKSRTRAHAQ). S91 carries the post-translational modification Phosphoserine. Glycyl lysine isopeptide (Lys-Gly) (interchain with G-Cter in ubiquitin) cross-links involve residues K146 and K186. Residues 164–189 (LKNRAARDRRAQRVAEKRDALLKEDA) form a disordered region.

This sequence belongs to the eukaryotic ribosomal protein eL19 family. As to quaternary structure, component of the large ribosomal subunit (LSU). Mature yeast ribosomes consist of a small (40S) and a large (60S) subunit. The 40S small subunit contains 1 molecule of ribosomal RNA (18S rRNA) and 33 different proteins (encoded by 57 genes). The large 60S subunit contains 3 rRNA molecules (25S, 5.8S and 5S rRNA) and 46 different proteins (encoded by 81 genes). eL19 lies in close proximity to the binding site for eukaryotic initiation factor eIF4G.

The protein localises to the cytoplasm. Its function is as follows. Component of the ribosome, a large ribonucleoprotein complex responsible for the synthesis of proteins in the cell. The small ribosomal subunit (SSU) binds messenger RNAs (mRNAs) and translates the encoded message by selecting cognate aminoacyl-transfer RNA (tRNA) molecules. The large subunit (LSU) contains the ribosomal catalytic site termed the peptidyl transferase center (PTC), which catalyzes the formation of peptide bonds, thereby polymerizing the amino acids delivered by tRNAs into a polypeptide chain. The nascent polypeptides leave the ribosome through a tunnel in the LSU and interact with protein factors that function in enzymatic processing, targeting, and the membrane insertion of nascent chains at the exit of the ribosomal tunnel. eL19 may play a role in the last stages of translation initiation, in particular subunit joining and shedding/releasing factors. The chain is Large ribosomal subunit protein eL19A from Saccharomyces cerevisiae (strain ATCC 204508 / S288c) (Baker's yeast).